A 113-amino-acid chain; its full sequence is Venom protein 184 (113 aa).

Residues Met-1–Ser-21 form the signal peptide.

In terms of processing, contains 3 disulfide bonds. Expressed by the venom gland.

Its subcellular location is the secreted. The chain is Venom protein 184 from Lychas mucronatus (Chinese swimming scorpion).